Reading from the N-terminus, the 85-residue chain is ATP synthase subunit c (85 aa).

The next 2 helical transmembrane spans lie at 22-39 (AIGA…IGKI) and 65-85 (AALI…VFFL).

Belongs to the ATPase C chain family. F-type ATPases have 2 components, F(1) - the catalytic core - and F(0) - the membrane proton channel. F(1) has five subunits: alpha(3), beta(3), gamma(1), delta(1), epsilon(1). F(0) has three main subunits: a(1), b(2) and c(10-14). The alpha and beta chains form an alternating ring which encloses part of the gamma chain. F(1) is attached to F(0) by a central stalk formed by the gamma and epsilon chains, while a peripheral stalk is formed by the delta and b chains.

It is found in the cell inner membrane. In terms of biological role, f(1)F(0) ATP synthase produces ATP from ADP in the presence of a proton or sodium gradient. F-type ATPases consist of two structural domains, F(1) containing the extramembraneous catalytic core and F(0) containing the membrane proton channel, linked together by a central stalk and a peripheral stalk. During catalysis, ATP synthesis in the catalytic domain of F(1) is coupled via a rotary mechanism of the central stalk subunits to proton translocation. Functionally, key component of the F(0) channel; it plays a direct role in translocation across the membrane. A homomeric c-ring of between 10-14 subunits forms the central stalk rotor element with the F(1) delta and epsilon subunits. This Bacteroides thetaiotaomicron (strain ATCC 29148 / DSM 2079 / JCM 5827 / CCUG 10774 / NCTC 10582 / VPI-5482 / E50) protein is ATP synthase subunit c.